Here is a 204-residue protein sequence, read N- to C-terminus: Thiamine-phosphate synthase (204 aa).

Residues 35–39 and asparagine 67 contribute to the 4-amino-2-methyl-5-(diphosphooxymethyl)pyrimidine site; that span reads QVREK. 2 residues coordinate Mg(2+): aspartate 68 and aspartate 87. Serine 106 is a 4-amino-2-methyl-5-(diphosphooxymethyl)pyrimidine binding site. 132-134 serves as a coordination point for 2-[(2R,5Z)-2-carboxy-4-methylthiazol-5(2H)-ylidene]ethyl phosphate; that stretch reads TPT. A 4-amino-2-methyl-5-(diphosphooxymethyl)pyrimidine-binding site is contributed by lysine 135. 2-[(2R,5Z)-2-carboxy-4-methylthiazol-5(2H)-ylidene]ethyl phosphate-binding positions include glycine 163 and 183 to 184; that span reads VS.

Belongs to the thiamine-phosphate synthase family. Requires Mg(2+) as cofactor.

It carries out the reaction 2-[(2R,5Z)-2-carboxy-4-methylthiazol-5(2H)-ylidene]ethyl phosphate + 4-amino-2-methyl-5-(diphosphooxymethyl)pyrimidine + 2 H(+) = thiamine phosphate + CO2 + diphosphate. The catalysed reaction is 2-(2-carboxy-4-methylthiazol-5-yl)ethyl phosphate + 4-amino-2-methyl-5-(diphosphooxymethyl)pyrimidine + 2 H(+) = thiamine phosphate + CO2 + diphosphate. It catalyses the reaction 4-methyl-5-(2-phosphooxyethyl)-thiazole + 4-amino-2-methyl-5-(diphosphooxymethyl)pyrimidine + H(+) = thiamine phosphate + diphosphate. It functions in the pathway cofactor biosynthesis; thiamine diphosphate biosynthesis; thiamine phosphate from 4-amino-2-methyl-5-diphosphomethylpyrimidine and 4-methyl-5-(2-phosphoethyl)-thiazole: step 1/1. In terms of biological role, condenses 4-methyl-5-(beta-hydroxyethyl)thiazole monophosphate (THZ-P) and 2-methyl-4-amino-5-hydroxymethyl pyrimidine pyrophosphate (HMP-PP) to form thiamine monophosphate (TMP). This Vibrio campbellii (strain ATCC BAA-1116) protein is Thiamine-phosphate synthase.